Consider the following 570-residue polypeptide: Probable electron transfer flavoprotein-ubiquinone oxidoreductase (570 aa).

13–27 (VVIVGAGPAGLSAAI) serves as a coordination point for FAD. Positions 515, 539, 542, and 545 each coordinate [4Fe-4S] cluster. Residues 530–559 (KRFQINAANCVHCKTCDIKDPSQNITWVTP) enclose the 4Fe-4S ferredoxin-type domain.

[4Fe-4S] cluster is required as a cofactor. The cofactor is FAD.

The enzyme catalyses a ubiquinone + reduced [electron-transfer flavoprotein] = a ubiquinol + oxidized [electron-transfer flavoprotein] + H(+). In terms of biological role, accepts electrons from ETF and reduces ubiquinone. The sequence is that of Probable electron transfer flavoprotein-ubiquinone oxidoreductase (etfD) from Acinetobacter baylyi (strain ATCC 33305 / BD413 / ADP1).